A 323-amino-acid polypeptide reads, in one-letter code: MTYLFTVLELLSFLVPVLLAVAFLTLVERKVLGYMQFRKGPNIVGPYGLLQPFADGLKLFIKETLKPSTASPYLFFLSPLLFMALALLLWNLMPVHTPTLNFQLSLLLVLGLSSLSVYAILGSGWAANSKYSLIGAIRAVAQTISYEISLALILLSLIIITSSFNLTYIMNAQEFSWFALSCLPLFYIWFVSTLAETNRAPFDLTEGESEIVSGYNVEYAGGPFALFFIAEYANIILMNLFSVVIFLGGPWPANELFPLNVLTIGLKTTLLVFLFLWVRAAYPRFRYDQLMFLTWKSYLPLSIGALCATITIVLTLGIYLPLF.

The next 8 helical transmembrane spans lie at 4–24, 73–93, 106–126, 150–170, 175–195, 226–246, 256–276, and 303–323; these read LFTVLELLSFLVPVLLAVAFL, YLFFLSPLLFMALALLLWNLM, LLLVLGLSSLSVYAILGSGWA, LALILLSLIIITSSFNLTYIM, FSWFALSCLPLFYIWFVSTLA, LFFIAEYANIILMNLFSVVIF, LFPLNVLTIGLKTTLLVFLFL, and IGALCATITIVLTLGIYLPLF.

It belongs to the complex I subunit 1 family.

The protein resides in the mitochondrion inner membrane. The enzyme catalyses a ubiquinone + NADH + 5 H(+)(in) = a ubiquinol + NAD(+) + 4 H(+)(out). In terms of biological role, core subunit of the mitochondrial membrane respiratory chain NADH dehydrogenase (Complex I) that is believed to belong to the minimal assembly required for catalysis. Complex I functions in the transfer of electrons from NADH to the respiratory chain. The immediate electron acceptor for the enzyme is believed to be ubiquinone. The polypeptide is NADH-ubiquinone oxidoreductase chain 1 (ND1) (Paracentrotus lividus (Common sea urchin)).